The chain runs to 248 residues: 5'-nucleotidase SurE (248 aa).

A divalent metal cation-binding residues include D8, D9, S39, and N92.

It belongs to the SurE nucleotidase family. It depends on a divalent metal cation as a cofactor.

Its subcellular location is the cytoplasm. It carries out the reaction a ribonucleoside 5'-phosphate + H2O = a ribonucleoside + phosphate. Its function is as follows. Nucleotidase that shows phosphatase activity on nucleoside 5'-monophosphates. The sequence is that of 5'-nucleotidase SurE from Tolumonas auensis (strain DSM 9187 / NBRC 110442 / TA 4).